A 336-amino-acid chain; its full sequence is Phospho-N-acetylmuramoyl-pentapeptide-transferase (336 aa).

10 helical membrane passes run 3–23 (LTLI…PYFI), 53–73 (GGTV…LFSI), 78–98 (SLAL…IGFL), 118–138 (LALQ…PSGI), 143–163 (VFGY…FWVV), 174–194 (GIDG…GVIA), 200–220 (FDVL…FCFN), 226–246 (VFMG…ISIA), 251–271 (WTLL…MLQV), and 316–336 (AFLW…LYVF).

It belongs to the glycosyltransferase 4 family. MraY subfamily. The cofactor is Mg(2+).

The protein localises to the cell membrane. It catalyses the reaction UDP-N-acetyl-alpha-D-muramoyl-L-alanyl-gamma-D-glutamyl-L-lysyl-D-alanyl-D-alanine + di-trans,octa-cis-undecaprenyl phosphate = Mur2Ac(oyl-L-Ala-gamma-D-Glu-L-Lys-D-Ala-D-Ala)-di-trans,octa-cis-undecaprenyl diphosphate + UMP. It participates in cell wall biogenesis; peptidoglycan biosynthesis. In terms of biological role, catalyzes the initial step of the lipid cycle reactions in the biosynthesis of the cell wall peptidoglycan: transfers peptidoglycan precursor phospho-MurNAc-pentapeptide from UDP-MurNAc-pentapeptide onto the lipid carrier undecaprenyl phosphate, yielding undecaprenyl-pyrophosphoryl-MurNAc-pentapeptide, known as lipid I. The polypeptide is Phospho-N-acetylmuramoyl-pentapeptide-transferase (Streptococcus pyogenes serotype M4 (strain MGAS10750)).